We begin with the raw amino-acid sequence, 629 residues long: tRNA uridine 5-carboxymethylaminomethyl modification enzyme MnmG (629 aa).

FAD contacts are provided by residues 13–18 (GGGHAG), Val-125, and Ser-180. An NAD(+)-binding site is contributed by 273 to 287 (GPRYCPSIEDKVMRF). Gln-370 contributes to the FAD binding site.

The protein belongs to the MnmG family. In terms of assembly, homodimer. Heterotetramer of two MnmE and two MnmG subunits. FAD is required as a cofactor.

The protein localises to the cytoplasm. NAD-binding protein involved in the addition of a carboxymethylaminomethyl (cmnm) group at the wobble position (U34) of certain tRNAs, forming tRNA-cmnm(5)s(2)U34. The chain is tRNA uridine 5-carboxymethylaminomethyl modification enzyme MnmG from Enterobacter sp. (strain 638).